The following is a 224-amino-acid chain: Ribonuclease 3 (224 aa).

The RNase III domain occupies 4 to 126 (LDRLQHKIGY…IIGAMSLDSN (123 aa)). Glu-39 contributes to the Mg(2+) binding site. Residue Asp-43 is part of the active site. The Mg(2+) site is built by Asp-112 and Glu-115. Residue Glu-115 is part of the active site. The region spanning 153–223 (DPKTRLQEYL…AEQILKVLDI (71 aa)) is the DRBM domain.

The protein belongs to the ribonuclease III family. Homodimer. The cofactor is Mg(2+).

It localises to the cytoplasm. It carries out the reaction Endonucleolytic cleavage to 5'-phosphomonoester.. Digests double-stranded RNA. Involved in the processing of primary rRNA transcript to yield the immediate precursors to the large and small rRNAs (23S and 16S). Processes some mRNAs, and tRNAs when they are encoded in the rRNA operon. Processes pre-crRNA and tracrRNA of type II CRISPR loci if present in the organism. The protein is Ribonuclease 3 of Actinobacillus succinogenes (strain ATCC 55618 / DSM 22257 / CCUG 43843 / 130Z).